Reading from the N-terminus, the 473-residue chain is Hyaluronidase-2 (473 aa).

Positions 1-20 (MWTGLGPAVTLALVLVVAWA) are cleaved as a signal peptide. 2 cysteine pairs are disulfide-bonded: Cys47–Cys343 and Cys214–Cys230. Residues Asn77 and Asn106 are each glycosylated (N-linked (GlcNAc...) asparagine). Glu138 serves as the catalytic Proton donor. Asn340 and Asn360 each carry an N-linked (GlcNAc...) asparagine glycan. The region spanning 364–442 (AAQYCSWAQC…YLGWGGEQCQ (79 aa)) is the EGF-like domain. Intrachain disulfides connect Cys368–Cys379, Cys373–Cys430, and Cys432–Cys441. The GPI-anchor amidated glycine moiety is linked to residue Gly451. Positions 452-473 (ASGAWAGSHLTGLLAVAVLAFT) are cleaved as a propeptide — removed in mature form.

The protein belongs to the glycosyl hydrolase 56 family. In terms of assembly, interacts with MST1R.

The protein resides in the cell membrane. It carries out the reaction Random hydrolysis of (1-&gt;4)-linkages between N-acetyl-beta-D-glucosamine and D-glucuronate residues in hyaluronate.. Catalyzes hyaluronan degradation into small fragments that are endocytosed and degraded in lysosomes by HYAL1 and exoglycosidases. Essential for the breakdown of extracellular matrix hyaluronan. The protein is Hyaluronidase-2 (HYAL2) of Bos taurus (Bovine).